We begin with the raw amino-acid sequence, 273 residues long: Shikimate dehydrogenase (NADP(+)) (273 aa).

Shikimate is bound by residues 14–16 (SKS) and T61. K65 functions as the Proton acceptor in the catalytic mechanism. Residues N86 and D102 each coordinate shikimate. Residues 126 to 130 (GAGGA), 150 to 155 (NRTHAK), and M213 contribute to the NADP(+) site. Y215 contacts shikimate. G237 contributes to the NADP(+) binding site.

The protein belongs to the shikimate dehydrogenase family. In terms of assembly, homodimer.

It catalyses the reaction shikimate + NADP(+) = 3-dehydroshikimate + NADPH + H(+). Its pathway is metabolic intermediate biosynthesis; chorismate biosynthesis; chorismate from D-erythrose 4-phosphate and phosphoenolpyruvate: step 4/7. Functionally, involved in the biosynthesis of the chorismate, which leads to the biosynthesis of aromatic amino acids. Catalyzes the reversible NADPH linked reduction of 3-dehydroshikimate (DHSA) to yield shikimate (SA). The chain is Shikimate dehydrogenase (NADP(+)) from Aeromonas salmonicida (strain A449).